We begin with the raw amino-acid sequence, 62 residues long: Statherin (62 aa).

The first 19 residues, 1–19 (MKFLVFAFILALMVSMIGA), serve as a signal peptide directing secretion. The hydroxyapatite-binding; inhibits crystal growth stretch occupies residues 20 to 25 (DSSEEK). Ser21 and Ser22 each carry phosphoserine. Residues 25 to 56 (KFLRRIGRFGYGYGPYQPVPEQPLYPQPYQPQ) constitute a cross-link (isoglutamyl lysine isopeptide (Lys-Gln); in form cyclo-statherin Q-37). Residues 25 to 58 (KFLRRIGRFGYGYGPYQPVPEQPLYPQPYQPQYQ) constitute a cross-link (isoglutamyl lysine isopeptide (Lys-Gln); in form cyclo-statherin Q-39). A hydrophobic; inhibits precipitation of calcium phosphate salts region spans residues 38–62 (GPYQPVPEQPLYPQPYQPQYQQYTF).

It belongs to the histatin/statherin family. Post-translationally, substrate for transglutaminase-2. More than 95% of the cyclized peptide is cyclo-statherin Q-37, and less than 5% is cyclo-statherin Q-39. Cyclized forms account for about 1% of total statherin in saliva. Sulfated on tyrosine residues. Secreted by parotid and submandibular glands.

The protein resides in the secreted. Its function is as follows. Salivary protein that stabilizes saliva supersaturated with calcium salts by inhibiting the precipitation of calcium phosphate salts. It also modulates hydroxyapatite crystal formation on the tooth surface. The sequence is that of Statherin (STATH) from Homo sapiens (Human).